The primary structure comprises 333 residues: 4-hydroxyproline 2-epimerase (333 aa).

Residue Cys90 is the Proton acceptor of the active site. Substrate-binding positions include 91–92, His223, and Asp249; that span reads GH. Cys253 functions as the Proton donor in the catalytic mechanism. 254-255 lines the substrate pocket; that stretch reads GT.

This sequence belongs to the proline racemase family.

The catalysed reaction is trans-4-hydroxy-L-proline = cis-4-hydroxy-D-proline. Its function is as follows. Catalyzes the epimerization of trans-4-hydroxy-L-proline (t4LHyp) to cis-4-hydroxy-D-proline (c4DHyp). Is likely involved in a degradation pathway that converts t4LHyp to alpha-ketoglutarate. Displays no proline racemase activity. The polypeptide is 4-hydroxyproline 2-epimerase (Shewanella loihica (strain ATCC BAA-1088 / PV-4)).